A 251-amino-acid chain; its full sequence is Small ribosomal subunit protein uS2 (251 aa).

The protein belongs to the universal ribosomal protein uS2 family.

This chain is Small ribosomal subunit protein uS2, found in Nitrosomonas europaea (strain ATCC 19718 / CIP 103999 / KCTC 2705 / NBRC 14298).